The sequence spans 383 residues: ATP phosphoribosyltransferase regulatory subunit (383 aa).

It belongs to the class-II aminoacyl-tRNA synthetase family. HisZ subfamily. As to quaternary structure, heteromultimer composed of HisG and HisZ subunits.

The protein localises to the cytoplasm. Its pathway is amino-acid biosynthesis; L-histidine biosynthesis; L-histidine from 5-phospho-alpha-D-ribose 1-diphosphate: step 1/9. Functionally, required for the first step of histidine biosynthesis. May allow the feedback regulation of ATP phosphoribosyltransferase activity by histidine. The polypeptide is ATP phosphoribosyltransferase regulatory subunit (Neisseria meningitidis serogroup C / serotype 2a (strain ATCC 700532 / DSM 15464 / FAM18)).